The primary structure comprises 257 residues: MTIFPLPAFNDNYIWIIQDKDSSGIWAVDPGKADVVLNFCHEYQKTLTGILITHHHKDHTGGVAELKQHSNCPVYGPEHLTELVTHPVDDGDRILVFSKVFTVIATPGHTLDHLCYFSEQETPILLSGDTLFKGGCGRIMEGTHEQMLAAMIKISGLPNDTLIYGTHEYTLANYRFALSLEPNNKDLIESNITCQKLRTEEKPTLPTKLSIEKKTNPFLRSHIEALKIQAAQQLNEIPAENPIGAFSQVRRAKDSFS.

Zn(2+) contacts are provided by H54, H56, D58, H59, H109, D129, and H167.

It belongs to the metallo-beta-lactamase superfamily. Glyoxalase II family. As to quaternary structure, monomer. Zn(2+) serves as cofactor.

The catalysed reaction is an S-(2-hydroxyacyl)glutathione + H2O = a 2-hydroxy carboxylate + glutathione + H(+). Its pathway is secondary metabolite metabolism; methylglyoxal degradation; (R)-lactate from methylglyoxal: step 2/2. Functionally, thiolesterase that catalyzes the hydrolysis of S-D-lactoyl-glutathione to form glutathione and D-lactic acid. This Marinomonas sp. (strain MWYL1) protein is Hydroxyacylglutathione hydrolase.